A 306-amino-acid chain; its full sequence is Putative syntaxin-131 (306 aa).

The residue at position 1 (Met1) is an N-acetylmethionine. Over 1 to 276 (MNDLLKGSLE…AVKSQKSSRK (276 aa)) the chain is Cytoplasmic. Over residues 11–23 (FSRDRSNRSDIES) the composition is skewed to basic and acidic residues. Residues 11–35 (FSRDRSNRSDIESGHGPGNSGDLGL) form a disordered region. 2 coiled-coil regions span residues 35-72 (LSGF…VTKA) and 134-162 (KKKF…VERR). Residues 205–267 (LAEIQERHDA…QSGNNQLTKA (63 aa)) enclose the t-SNARE coiled-coil homology domain. A helical; Anchor for type IV membrane protein transmembrane segment spans residues 277–297 (WMCIAILILLIIIIITVISVL). Residues 298 to 306 (KPWTQKNGA) lie on the Vesicular side of the membrane.

The protein belongs to the syntaxin family. In terms of assembly, part of the t-SNARE complex.

Its subcellular location is the membrane. Vesicle trafficking protein that functions in the secretory pathway. The protein is Putative syntaxin-131 (SYP131) of Arabidopsis thaliana (Mouse-ear cress).